We begin with the raw amino-acid sequence, 138 residues long: Large ribosomal subunit protein uL16 (138 aa).

Residues 1 to 13 are compositionally biased toward basic residues; sequence MLQPARRKYRKEQ. Positions 1 to 22 are disordered; that stretch reads MLQPARRKYRKEQKGRNTGVAT.

The protein belongs to the universal ribosomal protein uL16 family. As to quaternary structure, part of the 50S ribosomal subunit.

In terms of biological role, binds 23S rRNA and is also seen to make contacts with the A and possibly P site tRNAs. The chain is Large ribosomal subunit protein uL16 from Paracidovorax citrulli (strain AAC00-1) (Acidovorax citrulli).